A 138-amino-acid polypeptide reads, in one-letter code: Transcription antitermination protein NusB (138 aa).

The protein belongs to the NusB family.

Involved in transcription antitermination. Required for transcription of ribosomal RNA (rRNA) genes. Binds specifically to the boxA antiterminator sequence of the ribosomal RNA (rrn) operons. This is Transcription antitermination protein NusB from Helicobacter pylori (strain ATCC 700392 / 26695) (Campylobacter pylori).